The sequence spans 260 residues: MPRYKLTVEYDGASFVGWQRQKNGLSVQEVIETALLAINGAPVGIRGAGRTDAGVHASAQVAHADLAREWRPDVLRDALNAHMRPALVAVVAAEPVPETFDARFSAIRRHYLYRIINRRAPLTFEAGRAWLVKRRLDARAMHEAAQVLTGRHDFSTFRAAECQAASPIRTLERLDVQAVGDLIEIRASARSFLHHQVRSMVGSLEMVGSGKWSAGDLRAALEACDRRRCGMVAPAAGLYLTGVDYPEEGEEKGAQPFFGE.

The active-site Nucleophile is the D52. A substrate-binding site is contributed by Y111.

Belongs to the tRNA pseudouridine synthase TruA family. Homodimer.

It carries out the reaction uridine(38/39/40) in tRNA = pseudouridine(38/39/40) in tRNA. Its function is as follows. Formation of pseudouridine at positions 38, 39 and 40 in the anticodon stem and loop of transfer RNAs. The protein is tRNA pseudouridine synthase A of Beijerinckia indica subsp. indica (strain ATCC 9039 / DSM 1715 / NCIMB 8712).